The primary structure comprises 147 residues: Small ribosomal subunit protein uS12 (147 aa).

Belongs to the universal ribosomal protein uS12 family. As to quaternary structure, part of the 30S ribosomal subunit.

Its function is as follows. With S4 and S5 plays an important role in translational accuracy. Located at the interface of the 30S and 50S subunits. This chain is Small ribosomal subunit protein uS12, found in Sulfolobus acidocaldarius (strain ATCC 33909 / DSM 639 / JCM 8929 / NBRC 15157 / NCIMB 11770).